The sequence spans 600 residues: Chaperone protein DnaK (600 aa).

Thr175 carries the phosphothreonine; by autocatalysis modification. A compositionally biased stretch (low complexity) spans 569–578; sequence SFAQATAQQA. The segment at 569-600 is disordered; that stretch reads SFAQATAQQANTSESDPKADDSNTIDAEIKQD. Positions 583 to 600 are enriched in basic and acidic residues; that stretch reads SDPKADDSNTIDAEIKQD.

Belongs to the heat shock protein 70 family.

Acts as a chaperone. This chain is Chaperone protein DnaK, found in Mesomycoplasma hyopneumoniae (strain J / ATCC 25934 / NCTC 10110) (Mycoplasma hyopneumoniae).